The chain runs to 420 residues: Serine hydroxymethyltransferase (420 aa).

Residues Leu121 and 125 to 127 contribute to the (6S)-5,6,7,8-tetrahydrofolate site; that span reads GHL. Lys230 carries the post-translational modification N6-(pyridoxal phosphate)lysine. Residues Glu246 and 354 to 356 contribute to the (6S)-5,6,7,8-tetrahydrofolate site; that span reads SPF.

This sequence belongs to the SHMT family. In terms of assembly, homodimer. Pyridoxal 5'-phosphate is required as a cofactor.

The protein localises to the cytoplasm. The enzyme catalyses (6R)-5,10-methylene-5,6,7,8-tetrahydrofolate + glycine + H2O = (6S)-5,6,7,8-tetrahydrofolate + L-serine. The protein operates within one-carbon metabolism; tetrahydrofolate interconversion. Its pathway is amino-acid biosynthesis; glycine biosynthesis; glycine from L-serine: step 1/1. Its function is as follows. Catalyzes the reversible interconversion of serine and glycine with tetrahydrofolate (THF) serving as the one-carbon carrier. This reaction serves as the major source of one-carbon groups required for the biosynthesis of purines, thymidylate, methionine, and other important biomolecules. Also exhibits THF-independent aldolase activity toward beta-hydroxyamino acids, producing glycine and aldehydes, via a retro-aldol mechanism. In Rickettsia akari (strain Hartford), this protein is Serine hydroxymethyltransferase.